The sequence spans 332 residues: Elongin-A (332 aa).

Residues 24-68 form the F-box domain; sequence LEDIGHMPYALVRRVLLKMSAEQLLRLERASPALLLEDEEAWQQL. Positions 228-332 are disordered; it reads TPSAQPAASL…KPRVYIHTPR (105 aa). Polar residues predominate over residues 296 to 309; it reads LFSSPALSTLLPQQ. Over residues 320–332 the composition is skewed to basic residues; sequence PPKKPRVYIHTPR.

The protein belongs to the ELA1 family. Heterodimer with ELC1. Component of a CRL3 E3 ubiquitin ligase complex consisting of a cullin, the linker protein ELC1, the substrate receptor ELA1, and a RING protein. Interacts with the large RNA polymerase II subunit RPO21 in a manner dependent on DEF1.

In terms of biological role, as part of the CRL3 E3 ubiquitin ligase complex; polyubiquitylates monoubiquitylated RNA polymerase II subunit RPO21 to trigger its proteolysis; plays a role in global genomic repair. This chain is Elongin-A (ELA1), found in Eremothecium gossypii (strain ATCC 10895 / CBS 109.51 / FGSC 9923 / NRRL Y-1056) (Yeast).